The chain runs to 464 residues: Mitogen-activated protein kinase 10 (464 aa).

One can recognise a Protein kinase domain in the interval 64–359 (YQNLKPIGSG…VDDALQHPYI (296 aa)). Residues 70–78 (IGSGAQGIV) and lysine 93 contribute to the ATP site. Aspartate 189 serves as the catalytic Proton acceptor. Residue threonine 221 is modified to Phosphothreonine; by MAP2K7. Positions 221-223 (TPY) match the TXY motif. A Phosphotyrosine; by MAP2K4 modification is found at tyrosine 223. The disordered stretch occupies residues 405-464 (TKNGVVKGQPSPSGAAVNSSESLPPSSSVNDISSMSTDQTLASDTDSSLEASAGPLGCCR). Residues 423–432 (SSESLPPSSS) are compositionally biased toward low complexity. Residues 433–454 (VNDISSMSTDQTLASDTDSSLE) are compositionally biased toward polar residues. S-palmitoyl cysteine attachment occurs at residues cysteine 462 and cysteine 463.

This sequence belongs to the protein kinase superfamily. CMGC Ser/Thr protein kinase family. MAP kinase subfamily. As to quaternary structure, interacts with MAPKBP1. Interacts with MAPK8IP1/JIP-1 and MAPK8IP3/JIP-3/JSAP1. Interacts with SPAG9/MAPK8IP4/JIP4. Interacts with HDAC9. Interacts with ARRB2; the interaction enhances MAPK10 activation by MAP3K5. Interacts with SARM1. Interacts with JUND; interaction is inhibited in the presence of MEN1. The cofactor is Mg(2+). In terms of processing, dually phosphorylated on Thr-221 and Tyr-223 by MAP2K4 and MAP2K7, which activates the enzyme. MAP2K7 shows a strong preference for Thr-221 while MAP2K4 phosphorylates Tyr-223 preferentially. Weakly autophosphorylated on threonine and tyrosine residues in vitro. Post-translationally, palmitoylation regulates subcellular location and axonal development. In terms of tissue distribution, specific to a subset of neurons in the nervous system. Present in the hippocampus and areas, cerebellum, striatum, brain stem, and weakly in the spinal cord. Very weak expression in testis and kidney.

It is found in the cytoplasm. The protein localises to the membrane. It localises to the nucleus. Its subcellular location is the mitochondrion. It carries out the reaction L-seryl-[protein] + ATP = O-phospho-L-seryl-[protein] + ADP + H(+). It catalyses the reaction L-threonyl-[protein] + ATP = O-phospho-L-threonyl-[protein] + ADP + H(+). Activated by threonine and tyrosine phosphorylation by two dual specificity kinases, MAP2K4 and MAP2K7. MAP2K7 phosphorylates MAPK10 on Thr-221 causing a conformational change and a large increase in Vmax. MAP2K4 then phosphorylates Tyr-223 resulting in a further increase in Vmax. Inhibited by dual specificity phosphatases, such as DUSP1. Inhibited by HDAC9. Functionally, serine/threonine-protein kinase involved in various processes such as neuronal proliferation, differentiation, migration and programmed cell death. Extracellular stimuli such as pro-inflammatory cytokines or physical stress stimulate the stress-activated protein kinase/c-Jun N-terminal kinase (SAP/JNK) signaling pathway. In this cascade, two dual specificity kinases MAP2K4/MKK4 and MAP2K7/MKK7 phosphorylate and activate MAPK10/JNK3. In turn, MAPK10/JNK3 phosphorylates a number of transcription factors, primarily components of AP-1 such as JUN and ATF2 and thus regulates AP-1 transcriptional activity. Plays regulatory roles in the signaling pathways during neuronal apoptosis. Phosphorylates the neuronal microtubule regulator STMN2. Acts in the regulation of the amyloid-beta precursor protein/APP signaling during neuronal differentiation by phosphorylating APP. Also participates in neurite growth in spiral ganglion neurons. Phosphorylates the CLOCK-BMAL1 heterodimer and plays a role in the photic regulation of the circadian clock. Phosphorylates JUND and this phosphorylation is inhibited in the presence of MEN1. This chain is Mitogen-activated protein kinase 10 (MAPK10), found in Homo sapiens (Human).